The following is a 421-amino-acid chain: tRNA (guanine(37)-N(1))-methyltransferase (421 aa).

S-adenosyl-L-methionine contacts are provided by residues Arg198, 242–243 (DL), 270–271 (DA), and Asn293.

The protein belongs to the class I-like SAM-binding methyltransferase superfamily. TRM5/TYW2 family. Monomer.

The protein resides in the mitochondrion matrix. It is found in the nucleus. It localises to the cytoplasm. It carries out the reaction guanosine(37) in tRNA + S-adenosyl-L-methionine = N(1)-methylguanosine(37) in tRNA + S-adenosyl-L-homocysteine + H(+). Functionally, specifically methylates the N1 position of guanosine-37 in various cytoplasmic and mitochondrial tRNAs. Methylation is not dependent on the nature of the nucleoside 5' of the target nucleoside. This is the first step in the biosynthesis of wybutosine (yW), a modified base adjacent to the anticodon of tRNAs and required for accurate decoding. The sequence is that of tRNA (guanine(37)-N(1))-methyltransferase from Paramecium tetraurelia.